We begin with the raw amino-acid sequence, 420 residues long: UDP-N-acetylglucosamine 1-carboxyvinyltransferase 2 (420 aa).

22 to 23 is a binding site for phosphoenolpyruvate; sequence KN. R92 provides a ligand contact to UDP-N-acetyl-alpha-D-glucosamine. The Proton donor role is filled by C116. At C116 the chain carries 2-(S-cysteinyl)pyruvic acid O-phosphothioketal. Residues 121-125, D307, and I329 each bind UDP-N-acetyl-alpha-D-glucosamine; that span reads RPIDL.

Belongs to the EPSP synthase family. MurA subfamily.

Its subcellular location is the cytoplasm. The enzyme catalyses phosphoenolpyruvate + UDP-N-acetyl-alpha-D-glucosamine = UDP-N-acetyl-3-O-(1-carboxyvinyl)-alpha-D-glucosamine + phosphate. It participates in cell wall biogenesis; peptidoglycan biosynthesis. Functionally, cell wall formation. Adds enolpyruvyl to UDP-N-acetylglucosamine. The sequence is that of UDP-N-acetylglucosamine 1-carboxyvinyltransferase 2 from Streptococcus thermophilus (strain ATCC BAA-250 / LMG 18311).